The chain runs to 263 residues: 3-methyl-2-oxobutanoate hydroxymethyltransferase (263 aa).

Mg(2+) is bound by residues D44 and D83. Residues 44–45, D83, and K113 contribute to the 3-methyl-2-oxobutanoate site; that span reads DS. E115 contacts Mg(2+). E183 acts as the Proton acceptor in catalysis.

This sequence belongs to the PanB family. In terms of assembly, homodecamer; pentamer of dimers. Requires Mg(2+) as cofactor.

The protein localises to the cytoplasm. It carries out the reaction 3-methyl-2-oxobutanoate + (6R)-5,10-methylene-5,6,7,8-tetrahydrofolate + H2O = 2-dehydropantoate + (6S)-5,6,7,8-tetrahydrofolate. The protein operates within cofactor biosynthesis; (R)-pantothenate biosynthesis; (R)-pantoate from 3-methyl-2-oxobutanoate: step 1/2. In terms of biological role, catalyzes the reversible reaction in which hydroxymethyl group from 5,10-methylenetetrahydrofolate is transferred onto alpha-ketoisovalerate to form ketopantoate. This chain is 3-methyl-2-oxobutanoate hydroxymethyltransferase, found in Trichodesmium erythraeum (strain IMS101).